We begin with the raw amino-acid sequence, 159 residues long: Phosphopantetheine adenylyltransferase (159 aa).

Thr10 lines the substrate pocket. ATP contacts are provided by residues 10–11 (TF) and His18. Positions 42, 74, and 88 each coordinate substrate. Residues 89-91 (GLR), Glu99, and 124-130 (WSFISSS) contribute to the ATP site.

It belongs to the bacterial CoaD family. Homohexamer. Requires Mg(2+) as cofactor.

It localises to the cytoplasm. It catalyses the reaction (R)-4'-phosphopantetheine + ATP + H(+) = 3'-dephospho-CoA + diphosphate. It functions in the pathway cofactor biosynthesis; coenzyme A biosynthesis; CoA from (R)-pantothenate: step 4/5. Its function is as follows. Reversibly transfers an adenylyl group from ATP to 4'-phosphopantetheine, yielding dephospho-CoA (dPCoA) and pyrophosphate. The protein is Phosphopantetheine adenylyltransferase of Yersinia pseudotuberculosis serotype I (strain IP32953).